The sequence spans 126 residues: Aspartate 1-decarboxylase (126 aa).

Serine 25 acts as the Schiff-base intermediate with substrate; via pyruvic acid in catalysis. Serine 25 is modified (pyruvic acid (Ser)). Threonine 57 serves as a coordination point for substrate. The active-site Proton donor is tyrosine 58. Position 73–75 (73–75) interacts with substrate; sequence GGA.

Belongs to the PanD family. As to quaternary structure, heterooctamer of four alpha and four beta subunits. Pyruvate serves as cofactor. In terms of processing, is synthesized initially as an inactive proenzyme, which is activated by self-cleavage at a specific serine bond to produce a beta-subunit with a hydroxyl group at its C-terminus and an alpha-subunit with a pyruvoyl group at its N-terminus.

The protein localises to the cytoplasm. The catalysed reaction is L-aspartate + H(+) = beta-alanine + CO2. It participates in cofactor biosynthesis; (R)-pantothenate biosynthesis; beta-alanine from L-aspartate: step 1/1. Functionally, catalyzes the pyruvoyl-dependent decarboxylation of aspartate to produce beta-alanine. The chain is Aspartate 1-decarboxylase from Acinetobacter baylyi (strain ATCC 33305 / BD413 / ADP1).